The chain runs to 89 residues: Putative acyl-CoA-binding protein (89 aa).

The 86-residue stretch at 3 to 88 (VEEQFKTSAE…VKELVEKNGL (86 aa)) folds into the ACB domain. Residues Lys15, 30–34 (YSLYK), Lys52, Lys56, and Tyr75 each bind an acyl-CoA.

The protein belongs to the ACBP family.

In terms of biological role, binds medium- and long-chain acyl-CoA esters with very high affinity and may function as an intracellular carrier of acyl-CoA esters. The chain is Putative acyl-CoA-binding protein from Hypsibius exemplaris (Freshwater tardigrade).